Reading from the N-terminus, the 102-residue chain is Small ribosomal subunit protein uS10 (102 aa).

It belongs to the universal ribosomal protein uS10 family. Part of the 30S ribosomal subunit.

Its function is as follows. Involved in the binding of tRNA to the ribosomes. The polypeptide is Small ribosomal subunit protein uS10 (Streptococcus thermophilus (strain CNRZ 1066)).